A 555-amino-acid polypeptide reads, in one-letter code: Glutamine--tRNA ligase (555 aa).

The short motif at 35 to 45 (PEPNGYLHIGH) is the 'HIGH' region element. ATP contacts are provided by residues 36 to 38 (EPN) and 42 to 48 (HIGHAKS). Residues aspartate 68 and tyrosine 213 each coordinate L-glutamine. Residues threonine 232 and 262–263 (RL) contribute to the ATP site. A 'KMSKS' region motif is present at residues 269–273 (ITSKR).

It belongs to the class-I aminoacyl-tRNA synthetase family. As to quaternary structure, monomer.

Its subcellular location is the cytoplasm. It catalyses the reaction tRNA(Gln) + L-glutamine + ATP = L-glutaminyl-tRNA(Gln) + AMP + diphosphate. The sequence is that of Glutamine--tRNA ligase from Ectopseudomonas mendocina (strain ymp) (Pseudomonas mendocina).